A 215-amino-acid chain; its full sequence is ATP-dependent dethiobiotin synthetase BioD (215 aa).

ATP is bound at residue 13 to 18; it reads DIGKTV. Position 17 (T17) interacts with Mg(2+). The active site involves K38. Position 42 (T42) interacts with substrate. ATP contacts are provided by residues D50, 115-118, and 175-176; these read EGAG and NH. D50 and E115 together coordinate Mg(2+).

This sequence belongs to the dethiobiotin synthetase family. As to quaternary structure, homodimer. Requires Mg(2+) as cofactor.

Its subcellular location is the cytoplasm. The catalysed reaction is (7R,8S)-7,8-diammoniononanoate + CO2 + ATP = (4R,5S)-dethiobiotin + ADP + phosphate + 3 H(+). It participates in cofactor biosynthesis; biotin biosynthesis; biotin from 7,8-diaminononanoate: step 1/2. In terms of biological role, catalyzes a mechanistically unusual reaction, the ATP-dependent insertion of CO2 between the N7 and N8 nitrogen atoms of 7,8-diaminopelargonic acid (DAPA, also called 7,8-diammoniononanoate) to form a ureido ring. This Neisseria meningitidis serogroup C / serotype 2a (strain ATCC 700532 / DSM 15464 / FAM18) protein is ATP-dependent dethiobiotin synthetase BioD.